Here is a 133-residue protein sequence, read N- to C-terminus: uncharacterized protein (133 aa).

The first 22 residues, 1-22 (MYRSSISIQVFICVLFLPLDSG), serve as a signal peptide directing secretion. Asparagine 111 carries an N-linked (GlcNAc...) asparagine glycan.

The protein localises to the secreted. This is an uncharacterized protein from Saccharomyces cerevisiae (strain ATCC 204508 / S288c) (Baker's yeast).